The primary structure comprises 324 residues: Beta-ketoacyl-[acyl-carrier-protein] synthase III (324 aa).

Residues Cys-112 and His-249 contribute to the active site. An ACP-binding region spans residues 250-254 (QANRR). The active site involves Asn-279.

The protein belongs to the thiolase-like superfamily. FabH family. As to quaternary structure, homodimer.

The protein localises to the cytoplasm. The enzyme catalyses malonyl-[ACP] + acetyl-CoA + H(+) = 3-oxobutanoyl-[ACP] + CO2 + CoA. Its pathway is lipid metabolism; fatty acid biosynthesis. In terms of biological role, catalyzes the condensation reaction of fatty acid synthesis by the addition to an acyl acceptor of two carbons from malonyl-ACP. Catalyzes the first condensation reaction which initiates fatty acid synthesis and may therefore play a role in governing the total rate of fatty acid production. Possesses both acetoacetyl-ACP synthase and acetyl transacylase activities. Its substrate specificity determines the biosynthesis of branched-chain and/or straight-chain of fatty acids. The sequence is that of Beta-ketoacyl-[acyl-carrier-protein] synthase III from Streptococcus pyogenes serotype M1.